The sequence spans 409 residues: Elongation factor Tu, chloroplastic (409 aa).

Positions 10–214 constitute a tr-type G domain; the sequence is KPHVNIGTIG…TVDAYIPTPE (205 aa). The segment at 19–26 is G1; that stretch reads GHVDHGKT. 19–26 lines the GTP pocket; that stretch reads GHVDHGKT. T26 is a binding site for Mg(2+). The interval 60–64 is G2; the sequence is GITIN. The tract at residues 81–84 is G3; that stretch reads DCPG. GTP-binding positions include 81-85 and 136-139; these read DCPGH and NKED. The segment at 136 to 139 is G4; that stretch reads NKED. Residues 174 to 176 are G5; the sequence is SAL.

It belongs to the TRAFAC class translation factor GTPase superfamily. Classic translation factor GTPase family. EF-Tu/EF-1A subfamily.

The protein localises to the plastid. The protein resides in the chloroplast. It carries out the reaction GTP + H2O = GDP + phosphate + H(+). GTP hydrolase that promotes the GTP-dependent binding of aminoacyl-tRNA to the A-site of ribosomes during protein biosynthesis. The polypeptide is Elongation factor Tu, chloroplastic (tufA) (Pleurastrum terricola (Filamentous green alga)).